Here is a 201-residue protein sequence, read N- to C-terminus: Akirin-2 (201 aa).

Residues Ser18 and Ser21 each carry the phosphoserine modification. The Nuclear localization signal motif lies at 23 to 28 (KRRRCA). Position 55 is a phosphoserine (Ser55). An SYVS motif motif is present at residues 198–201 (SYVS).

This sequence belongs to the akirin family. In terms of assembly, homodimer. Interacts with IPO9; the interaction is direct. Associates with 20S and 26S proteasomes. Interacts with SMARCD1; promoting SWI/SNF complex recruitment. Interacts with NFKBIZ. Interacts with YWHAB. In terms of processing, polyubiquitinated. Polyubiquitination is dependent of UBR5 that extends pre-ubiquitinated AKIRIN2.

It localises to the nucleus. The protein resides in the cytoplasm. It is found in the membrane. In terms of biological role, molecular adapter that acts as a bridge between a variety of multiprotein complexes, and which is involved in embryonic development, immunity, myogenesis and brain development. Plays a key role in nuclear protein degradation by promoting import of proteasomes into the nucleus: directly binds to fully assembled 20S proteasomes at one end and to nuclear import receptor IPO9 at the other end, bridging them together and mediating the import of pre-assembled proteasome complexes through the nuclear pore. Involved in innate immunity by regulating the production of interleukin-6 (IL6) downstream of Toll-like receptor (TLR): acts by bridging the NF-kappa-B inhibitor NFKBIZ and the SWI/SNF complex, leading to promote induction of IL6. Also involved in adaptive immunity by promoting B-cell activation. Involved in brain development: required for the survival and proliferation of cerebral cortical progenitor cells. Involved in myogenesis: required for skeletal muscle formation and skeletal development, possibly by regulating expression of muscle differentiation factors. Also plays a role in facilitating interdigital tissue regression during limb development. The chain is Akirin-2 from Mus musculus (Mouse).